The chain runs to 232 residues: Clarin-2 (232 aa).

The helical transmembrane segment at tyrosine 10–valine 30 threads the bilayer. An N-linked (GlcNAc...) asparagine glycan is attached at asparagine 48. Transmembrane regions (helical) follow at residues isoleucine 101–leucine 121, leucine 139–valine 159, and serine 188–isoleucine 208.

The protein belongs to the clarin family.

It localises to the cell projection. It is found in the stereocilium membrane. Functionally, plays a key role to hearing function. Required for normal organization and maintenance of the stereocilia bundle and for mechano-electrical transduction. The protein is Clarin-2 of Homo sapiens (Human).